A 282-amino-acid chain; its full sequence is Putative SLC9B1-like protein SLC9B1P1 (282 aa).

The next 7 helical transmembrane spans lie at 27–47, 51–71, 87–107, 135–155, 174–194, 198–218, and 239–259; these read LLAI…GGMI, IASL…GFFV, GFLV…IGLH, IITN…GAEV, LALC…GFSF, IFIA…GPLA, and VAFL…GILG.

The protein belongs to the monovalent cation:proton antiporter 1 (CPA1) transporter (TC 2.A.36) family.

It is found in the membrane. The polypeptide is Putative SLC9B1-like protein SLC9B1P1 (SLC9B1P1) (Homo sapiens (Human)).